Reading from the N-terminus, the 299-residue chain is ATP phosphoribosyltransferase (299 aa).

This sequence belongs to the ATP phosphoribosyltransferase family. Long subfamily. Equilibrium between an active dimeric form, an inactive hexameric form and higher aggregates. Interconversion between the various forms is largely reversible and is influenced by the natural substrates and inhibitors of the enzyme. Mg(2+) is required as a cofactor.

Its subcellular location is the cytoplasm. It carries out the reaction 1-(5-phospho-beta-D-ribosyl)-ATP + diphosphate = 5-phospho-alpha-D-ribose 1-diphosphate + ATP. The protein operates within amino-acid biosynthesis; L-histidine biosynthesis; L-histidine from 5-phospho-alpha-D-ribose 1-diphosphate: step 1/9. Feedback inhibited by histidine. Its function is as follows. Catalyzes the condensation of ATP and 5-phosphoribose 1-diphosphate to form N'-(5'-phosphoribosyl)-ATP (PR-ATP). Has a crucial role in the pathway because the rate of histidine biosynthesis seems to be controlled primarily by regulation of HisG enzymatic activity. This Salmonella agona (strain SL483) protein is ATP phosphoribosyltransferase.